The primary structure comprises 153 residues: Large ribosomal subunit protein uL13 (153 aa).

Belongs to the universal ribosomal protein uL13 family. As to quaternary structure, part of the 50S ribosomal subunit.

In terms of biological role, this protein is one of the early assembly proteins of the 50S ribosomal subunit, although it is not seen to bind rRNA by itself. It is important during the early stages of 50S assembly. The polypeptide is Large ribosomal subunit protein uL13 (Methylobacterium sp. (strain 4-46)).